Consider the following 75-residue polypeptide: ATP synthase subunit c (75 aa).

2 helical membrane passes run 9-29 (IGAGLAAIGMIGSGIGVGNIW) and 52-72 (IGFAVTEAIALFALVVALILL).

It belongs to the ATPase C chain family. As to quaternary structure, F-type ATPases have 2 components, F(1) - the catalytic core - and F(0) - the membrane proton channel. F(1) has five subunits: alpha(3), beta(3), gamma(1), delta(1), epsilon(1). F(0) has four main subunits: a(1), b(1), b'(1) and c(10-14). The alpha and beta chains form an alternating ring which encloses part of the gamma chain. F(1) is attached to F(0) by a central stalk formed by the gamma and epsilon chains, while a peripheral stalk is formed by the delta, b and b' chains.

It is found in the cell inner membrane. F(1)F(0) ATP synthase produces ATP from ADP in the presence of a proton or sodium gradient. F-type ATPases consist of two structural domains, F(1) containing the extramembraneous catalytic core and F(0) containing the membrane proton channel, linked together by a central stalk and a peripheral stalk. During catalysis, ATP synthesis in the catalytic domain of F(1) is coupled via a rotary mechanism of the central stalk subunits to proton translocation. In terms of biological role, key component of the F(0) channel; it plays a direct role in translocation across the membrane. A homomeric c-ring of between 10-14 subunits forms the central stalk rotor element with the F(1) delta and epsilon subunits. This is ATP synthase subunit c from Rhodospirillum rubrum (strain ATCC 11170 / ATH 1.1.1 / DSM 467 / LMG 4362 / NCIMB 8255 / S1).